We begin with the raw amino-acid sequence, 908 residues long: Glutamate receptor ionotropic, kainate 2 (908 aa).

A signal peptide spans 1-31 (MKIISPVLSNLVFSRSIKVLLCLLWIGYSQG). The Extracellular segment spans residues 32–561 (TTHVLRFGGI…VFSFLNPLSP (530 aa)). 7 N-linked (GlcNAc...) asparagine glycosylation sites follow: N67, N73, N275, N378, N412, N423, and N430. An intrachain disulfide couples C96 to C347. L-glutamate is bound by residues P516, A518, and R523. N-linked (GlcNAc...) asparagine glycosylation is present at N546. A helical membrane pass occupies residues 562 to 582 (DIWMYILLAYLGVSCVLFVIA). Residues 583 to 638 (RFSPYEWYNPHPCNPDSDVVENNFTLLNSFWFGVGALMQQGSELMPKALSTRIVGG) are Cytoplasmic-facing. A helical membrane pass occupies residues 639–659 (IWWFFTLIIISSYTANLAAFL). The Extracellular portion of the chain corresponds to 660–819 (TVERMESPID…KEASALGVQN (160 aa)). Residues A689, T690, and E738 each contribute to the L-glutamate site. C750 and C804 are oxidised to a cystine. N-linked (GlcNAc...) asparagine glycosylation is present at N751. A helical membrane pass occupies residues 820–840 (IGGIFIVLAAGLVLSVFVAVG). Residues 841 to 908 (EFLYKSKKNA…RRLPGKETMA (68 aa)) are Cytoplasmic-facing. A phosphoserine; by PKC mark is found at S846 and S868. Residue K886 forms a Glycyl lysine isopeptide (Lys-Gly) (interchain with G-Cter in SUMO1) linkage.

Belongs to the glutamate-gated ion channel (TC 1.A.10.1) family. GRIK2 subfamily. In terms of assembly, homotetramer and heterotetramer with GRIK5. Tetramers may be formed by the dimerization of dimers. Assembles into a kainate-gated homomeric channel that does not bind AMPA. Can form functional heteromeric receptors with GRIK4 and GRIK5. Can form functional heteromeric receptors with GRIK3. Interacts with DLG4. Interacts with NETO2. Interacts (via C-terminus) with KLHL17 (via kelch repeats); the interaction targets GRIK2 for degradation via ubiquitin-proteasome pathway. Post-translationally, sumoylation mediates kainate receptor-mediated endocytosis and regulates synaptic transmission. Sumoylation is enhanced by PIAS3 and desumoylated by SENP1. In terms of processing, ubiquitinated. Ubiquitination regulates the GRIK2 levels at the synapse by leading kainate receptor degradation through proteasome. Phosphorylated by PKC at Ser-868 upon agonist activation, this directly enhance sumoylation. In terms of tissue distribution, highest expression is found in the olfactory lobe, piriform cortex, dentate gyrus, hippocampus, granular cell layer of the cerebellum, and in caudate-putamen.

It is found in the cell membrane. The protein resides in the postsynaptic cell membrane. The catalysed reaction is Ca(2+)(in) = Ca(2+)(out). The enzyme catalyses Na(+)(in) = Na(+)(out). Its activity is regulated as follows. Cold receptor activity activated by temperatures between 10-19 degrees Celsius. Functionally, ionotropic glutamate receptor that functions as a cation-permeable ligand-gated ion channel, gated by L-glutamate and the glutamatergic agonist kainic acid. L-glutamate acts as an excitatory neurotransmitter at many synapses in the central nervous system. Binding of the excitatory neurotransmitter L-glutamate induces a conformation change, leading to the opening of the cation channel, and thereby converts the chemical signal to an electrical impulse. The receptor then desensitizes rapidly and enters a transient inactive state, characterized by the presence of bound agonist. Modulates cell surface expression of NETO2. In association with GRIK3, involved in presynaptic facilitation of glutamate release at hippocampal mossy fiber synapses. Its function is as follows. Independent of its ionotropic glutamate receptor activity, acts as a thermoreceptor conferring sensitivity to cold temperatures. Functions in dorsal root ganglion neurons. The protein is Glutamate receptor ionotropic, kainate 2 (Grik2) of Rattus norvegicus (Rat).